A 206-amino-acid chain; its full sequence is Histidine biosynthesis bifunctional protein HisIE (206 aa).

The phosphoribosyl-AMP cyclohydrolase stretch occupies residues 1-117 (MGSETTAAGD…SCFPTAPSQF (117 aa)). The segment at 118 to 206 (LGSLDALIAE…AVALLESRHK (89 aa)) is phosphoribosyl-ATP pyrophosphohydrolase.

In the N-terminal section; belongs to the PRA-CH family. It in the C-terminal section; belongs to the PRA-PH family.

Its subcellular location is the cytoplasm. The catalysed reaction is 1-(5-phospho-beta-D-ribosyl)-ATP + H2O = 1-(5-phospho-beta-D-ribosyl)-5'-AMP + diphosphate + H(+). The enzyme catalyses 1-(5-phospho-beta-D-ribosyl)-5'-AMP + H2O = 1-(5-phospho-beta-D-ribosyl)-5-[(5-phospho-beta-D-ribosylamino)methylideneamino]imidazole-4-carboxamide. The protein operates within amino-acid biosynthesis; L-histidine biosynthesis; L-histidine from 5-phospho-alpha-D-ribose 1-diphosphate: step 2/9. It functions in the pathway amino-acid biosynthesis; L-histidine biosynthesis; L-histidine from 5-phospho-alpha-D-ribose 1-diphosphate: step 3/9. The protein is Histidine biosynthesis bifunctional protein HisIE of Xanthomonas campestris pv. campestris (strain ATCC 33913 / DSM 3586 / NCPPB 528 / LMG 568 / P 25).